The following is a 72-amino-acid chain: uncharacterized protein (72 aa).

The tract at residues 15–62 (NNNYNNNNNNNNNNNNNNNNNNNNNNNNNNININNNNNNNNNNNNNNN) is disordered.

This is an uncharacterized protein from Dictyostelium discoideum (Social amoeba).